The following is a 128-amino-acid chain: Large ribosomal subunit protein bL17 (128 aa).

The protein belongs to the bacterial ribosomal protein bL17 family. In terms of assembly, part of the 50S ribosomal subunit. Contacts protein L32.

This chain is Large ribosomal subunit protein bL17, found in Klebsiella pneumoniae (strain 342).